Reading from the N-terminus, the 336-residue chain is Immune-associated nucleotide-binding protein 13 (336 aa).

The AIG1-type G domain maps to 15–221; it reads KPERTLVLLG…YMADLSHELR (207 aa). The interval 24-31 is G1; it reads GRTGNGKS. Residues 24 to 32 and Ser45 each bind GTP; that span reads GRTGNGKSA. The G2 stretch occupies residues 51 to 55; that stretch reads FITKE. The G3 stretch occupies residues 73-76; that stretch reads DTPG. The interval 143–146 is G4; it reads TNED. Residues 179–181 form a G5 region; it reads DNS. Position 180 (Asn180) interacts with GTP. A coiled-coil region spans residues 265-328; sequence KEKISNQLKE…EKETASLRTE (64 aa).

This sequence belongs to the TRAFAC class TrmE-Era-EngA-EngB-Septin-like GTPase superfamily. AIG1/Toc34/Toc159-like paraseptin GTPase family. IAN subfamily. Expressed in pollen grains.

The protein is Immune-associated nucleotide-binding protein 13 of Arabidopsis thaliana (Mouse-ear cress).